A 147-amino-acid chain; its full sequence is Hemoglobin subunit beta-3 (147 aa).

The Globin domain occupies 3–147; it reads HWTAEEKAVI…LVDALSHSYH (145 aa). 2 residues coordinate heme b: histidine 64 and histidine 93.

The protein belongs to the globin family. Heterotetramer of two alpha chains and two beta chains. As to expression, red blood cells.

Its function is as follows. This is a tadpole (larval) beta chain. This chain is Hemoglobin subunit beta-3, found in Aquarana catesbeiana (American bullfrog).